A 24-amino-acid chain; its full sequence is Cryptonin (24 aa).

Antimicrobial peptide, active against the Gram-negative bacterium E.coli K12-594 (MIC=3.12 ug/ml), the Gram-positive bacteria B.subtilis KCTC 3086 (MIC=3.12 ug/ml), S.aureus KCTC 1928 (MIC=25 ug/ml) and M.luteus KCTC 3063 (MIC=1.56 ug/ml), the antibiotic resistant bacteria methicillin-resistant S.aureus (MRSA) (MIC=25 ug/ml) and vancomycin-resistant Enterococci (VRE) (MIC=25 ug/ml), and the fungi C.albicans KCTC 7965 (MIC=50 ug/ml) and C.tropicalis KCTC 1925 (MIC=3.12 ug/ml). Has very low hemolytic activity on rat erythrocytes. In Cryptotympana dubia (Korean horse cicada), this protein is Cryptonin.